The sequence spans 171 residues: MIRKFLLTIFALWVGGFGYYLYLINSYKLNSNTTNAIIVFAGGGHKIETGIAWLKAGYAPILFITGIESTEQLKILLKERNVIEQQVIFAPNKIMSEEDNIKKVVDFIVTYNLTSIILVEHNYNMPFMLNKLEKAIPSSNNIYIVPYPVFSKQKYDVLLKSYHRYLMSILV.

A helical membrane pass occupies residues 5–25; the sequence is FLLTIFALWVGGFGYYLYLIN.

It localises to the membrane. This is an uncharacterized protein from Rickettsia conorii (strain ATCC VR-613 / Malish 7).